Consider the following 492-residue polypeptide: Fibroblast growth factor receptor substrate 3 (492 aa).

Residue Gly-2 is the site of N-myristoyl glycine attachment. Positions 13–115 (VPHNHPTKFK…QCNSINVTEE (103 aa)) constitute an IRS-type PTB domain. Disordered regions lie at residues 125 to 205 (PQEL…EDRR), 337 to 413 (QQLR…EPPR), and 425 to 492 (WGTA…DLPL). 2 stretches are compositionally biased toward polar residues: residues 133 to 147 (GSSQ…SFSN) and 166 to 185 (PSTS…QTLI). The segment covering 374–385 (TSTRASARSHSS) has biased composition (low complexity).

Binds NTRK1, FGFR1, NGFR, GRB2, PTPN11 and ERK2. Phosphorylated on tyrosine residues upon stimulation by BFGF or NGFB.

The protein localises to the membrane. Adapter protein that links FGF and NGF receptors to downstream signaling pathways. Involved in the activation of MAP kinases. Down-regulates ERK2 signaling by interfering with the phosphorylation and nuclear translocation of ERK2. The sequence is that of Fibroblast growth factor receptor substrate 3 (Frs3) from Rattus norvegicus (Rat).